Reading from the N-terminus, the 361-residue chain is Phospho-N-acetylmuramoyl-pentapeptide-transferase (361 aa).

Helical transmembrane passes span 28-48 (LAILTSFFFTFIIAPPCIRWL), 73-93 (TMGGIIITASVLVAVLMWGNL), 98-118 (MWIMIISFLGFGLIGFIDDYL), 132-152 (YKLFAQLLLASSVTLFLYFNP), 168-188 (WLIDLGIFYLPFAIFVIVGSS), 199-219 (GLAAGLVGIASIVNAVLLYIS), 235-255 (GTGELAVFCGAMLGACLGFLW), 263-283 (VFMGDVGSLSLGGALGSLAVI), 288-308 (IVLALVGGIFVVEALSVILQV), and 338-358 (KVIVRFWIIGIILALLSLLTL).

It belongs to the glycosyltransferase 4 family. MraY subfamily. Mg(2+) serves as cofactor.

Its subcellular location is the cell inner membrane. The enzyme catalyses UDP-N-acetyl-alpha-D-muramoyl-L-alanyl-gamma-D-glutamyl-meso-2,6-diaminopimeloyl-D-alanyl-D-alanine + di-trans,octa-cis-undecaprenyl phosphate = di-trans,octa-cis-undecaprenyl diphospho-N-acetyl-alpha-D-muramoyl-L-alanyl-D-glutamyl-meso-2,6-diaminopimeloyl-D-alanyl-D-alanine + UMP. It participates in cell wall biogenesis; peptidoglycan biosynthesis. In terms of biological role, catalyzes the initial step of the lipid cycle reactions in the biosynthesis of the cell wall peptidoglycan: transfers peptidoglycan precursor phospho-MurNAc-pentapeptide from UDP-MurNAc-pentapeptide onto the lipid carrier undecaprenyl phosphate, yielding undecaprenyl-pyrophosphoryl-MurNAc-pentapeptide, known as lipid I. The chain is Phospho-N-acetylmuramoyl-pentapeptide-transferase from Thermodesulfovibrio yellowstonii (strain ATCC 51303 / DSM 11347 / YP87).